We begin with the raw amino-acid sequence, 293 residues long: Prohibitin-2 (293 aa).

A helical; Signal-anchor for type II membrane protein membrane pass occupies residues 21–41 (FGGGFGLLALGGVGLLALSSL). Positions 190–235 (GREYAAAIEAKQVAQQEAERARFLVEKALQDKRSIIVKAEGEAQSA) form a coiled coil.

Belongs to the prohibitin family. As to quaternary structure, the mitochondrial prohibitin complex consists of two subunits (PHB1 and PHB2), assembled into a membrane-associated ring-shaped supercomplex of approximately 1 mDa.

It localises to the mitochondrion inner membrane. The protein resides in the cytoplasm. The protein localises to the nucleus. It is found in the cell membrane. Its function is as follows. Protein with pleiotropic attributes mediated in a cell-compartment- and tissue-specific manner, which include the plasma membrane-associated cell signaling functions, mitochondrial chaperone, and transcriptional co-regulator of transcription factors and sex steroid hormones in the nucleus. In the mitochondria, together with PHB, forms large ring complexes (prohibitin complexes) in the inner mitochondrial membrane (IMM) and functions as a chaperone protein that stabilizes mitochondrial respiratory enzymes and maintains mitochondrial integrity in the IMM, which is required for mitochondrial morphogenesis, neuronal survival, and normal lifespan. Functionally, in the nucleus, serves as transcriptional co-regulator. The protein is Prohibitin-2 (phbB) of Dictyostelium discoideum (Social amoeba).